Here is a 134-residue protein sequence, read N- to C-terminus: Retinol-binding protein 2 (134 aa).

Residues Lys-41 and Gln-109 each contribute to the all-trans-retinol site.

Belongs to the calycin superfamily. Fatty-acid binding protein (FABP) family.

The protein localises to the cytoplasm. In terms of biological role, intracellular transport of retinol. This Rattus norvegicus (Rat) protein is Retinol-binding protein 2 (Rbp2).